The following is a 112-amino-acid chain: Conotoxin vil14.4 (112 aa).

The signal sequence occupies residues 1-22 (MGFRVLVLVVMATTSALPFTFF). Positions 23–85 (EEPGRSPFRP…FAELSVGQRR (63 aa)) are excised as a propeptide. 2 disulfides stabilise this stretch: Cys91-Cys111 and Cys95-Cys107.

It belongs to the conotoxin R superfamily. Expressed by the venom duct.

It localises to the secreted. This Conus villepinii (Villepin's cone) protein is Conotoxin vil14.4.